A 257-amino-acid chain; its full sequence is 3-methyl-2-oxobutanoate hydroxymethyltransferase (257 aa).

Mg(2+) is bound by residues Asp-42 and Asp-86. Residues 42–43 (DS), Asp-86, and Lys-116 contribute to the 3-methyl-2-oxobutanoate site. Glu-118 contributes to the Mg(2+) binding site. The Proton acceptor role is filled by Glu-185.

It belongs to the PanB family. Homodecamer; pentamer of dimers. Mg(2+) serves as cofactor.

The protein resides in the cytoplasm. The enzyme catalyses 3-methyl-2-oxobutanoate + (6R)-5,10-methylene-5,6,7,8-tetrahydrofolate + H2O = 2-dehydropantoate + (6S)-5,6,7,8-tetrahydrofolate. Its pathway is cofactor biosynthesis; (R)-pantothenate biosynthesis; (R)-pantoate from 3-methyl-2-oxobutanoate: step 1/2. In terms of biological role, catalyzes the reversible reaction in which hydroxymethyl group from 5,10-methylenetetrahydrofolate is transferred onto alpha-ketoisovalerate to form ketopantoate. The protein is 3-methyl-2-oxobutanoate hydroxymethyltransferase of Prochlorococcus marinus subsp. pastoris (strain CCMP1986 / NIES-2087 / MED4).